The sequence spans 876 residues: MDFERYNARETEPKWRDKWERSATFKTDNDDPRPKYYVLEMFPYPSGRIHMGHVRNYTMGDVIARYKRARGFSVLHPMGWDAFGMPAENAAMQNKSHPAAWTYANIEAMRAQLKSMGLSLDWSREIATCDPAYYRHQQKMFLDFLAAGLVDRKKSKVNWDPVDHTVLANEQVIDGRGWRSGALVEQRELTQWFFKITDYAEDLLRSLDGLTRWPEKVRLMQANWIGRSEGLLVRFALEPTLSAPATEIEVYTTRPDTLFGAKFLAIAADHPIAADCAKADPALAAFIAECRLRGTSVAAIETAEKKGVDTGLRVRHPFDENWLLPVYVANFVLMDYGTGAIFGCPAHDQRDLDFANAYGLGATPVILPPDADPKTFVIADKAYDGDGLLFHSRFLDGMTVEAAQEEVARRLEEHPLGNRPQAKRQVNFRLRDWGISRQRYWGCPIPIIHCPEHGAVPVPAKDLPVELPPDVSFDEPGNPLDRHPTWKHVNCPICAAPSLRETDTMDTFVDSSWYFARFTQPWMEDAPTDPSAIAKWLPVDQYIGGVEHAILHLLYARFFTRAMQATGHAGEIREPFAGLFTQGMVVHETYRSEAGDWMFPADVRIEIGPAGRRAFDLASGAEVSIGGIEKMSKSKRNTVDPDEIIGTFGADTARWFVLSDSPPERDVIWTEEGVQGAAKFVQRLWRLIGELIFLSGADGAPKPQSISPQAAAIRRAAHQSLIRLEEDLDRLRFNRAVAQAHDLANKLGAAVGDIDSVEIAPDLRFAFREAAEILTLMIAPMMPHLAEECWARLGHKGLAAEAPWPQADHSLVVEETIDLPVQVNGKKRGDLIIDRAAGREAIEAAALALEPVKRALEGRPVKKIIIVPQRIVNVVA.

The 'HIGH' region signature appears at 43-53; it reads PYPSGRIHMGH. The 'KMSKS' region signature appears at 630-634; it reads KMSKS. Residue Lys-633 participates in ATP binding.

It belongs to the class-I aminoacyl-tRNA synthetase family.

The protein localises to the cytoplasm. The enzyme catalyses tRNA(Leu) + L-leucine + ATP = L-leucyl-tRNA(Leu) + AMP + diphosphate. The polypeptide is Leucine--tRNA ligase (Methylocella silvestris (strain DSM 15510 / CIP 108128 / LMG 27833 / NCIMB 13906 / BL2)).